Here is a 343-residue protein sequence, read N- to C-terminus: Endoglucanase C (343 aa).

Residue Glu-140 is the Proton donor of the active site. The active-site Nucleophile is Glu-280.

The protein belongs to the glycosyl hydrolase 5 (cellulase A) family.

It carries out the reaction Endohydrolysis of (1-&gt;4)-beta-D-glucosidic linkages in cellulose, lichenin and cereal beta-D-glucans.. It participates in glycan metabolism; cellulose degradation. This enzyme catalyzes the endohydrolysis of 1,4-beta-glucosidic linkages in cellulose, lichenin and cereal beta-D-glucans. The sequence is that of Endoglucanase C (celC) from Acetivibrio thermocellus (strain ATCC 27405 / DSM 1237 / JCM 9322 / NBRC 103400 / NCIMB 10682 / NRRL B-4536 / VPI 7372) (Clostridium thermocellum).